The following is a 629-amino-acid chain: tRNA uridine 5-carboxymethylaminomethyl modification enzyme MnmG (629 aa).

FAD is bound at residue 11–16; sequence GGGHAG. 273-287 contributes to the NAD(+) binding site; the sequence is GPRYCPSFEDKVVRF.

The protein belongs to the MnmG family. Homodimer. Heterotetramer of two MnmE and two MnmG subunits. FAD is required as a cofactor.

It localises to the cytoplasm. In terms of biological role, NAD-binding protein involved in the addition of a carboxymethylaminomethyl (cmnm) group at the wobble position (U34) of certain tRNAs, forming tRNA-cmnm(5)s(2)U34. The sequence is that of tRNA uridine 5-carboxymethylaminomethyl modification enzyme MnmG from Mycoplasma capricolum subsp. capricolum (strain California kid / ATCC 27343 / NCTC 10154).